Consider the following 400-residue polypeptide: Tryptophan synthase beta chain (400 aa).

Lys-92 is subject to N6-(pyridoxal phosphate)lysine.

Belongs to the TrpB family. In terms of assembly, tetramer of two alpha and two beta chains. It depends on pyridoxal 5'-phosphate as a cofactor.

The enzyme catalyses (1S,2R)-1-C-(indol-3-yl)glycerol 3-phosphate + L-serine = D-glyceraldehyde 3-phosphate + L-tryptophan + H2O. The protein operates within amino-acid biosynthesis; L-tryptophan biosynthesis; L-tryptophan from chorismate: step 5/5. Functionally, the beta subunit is responsible for the synthesis of L-tryptophan from indole and L-serine. The protein is Tryptophan synthase beta chain of Chromobacterium violaceum (strain ATCC 12472 / DSM 30191 / JCM 1249 / CCUG 213 / NBRC 12614 / NCIMB 9131 / NCTC 9757 / MK).